Reading from the N-terminus, the 96-residue chain is Small ribosomal subunit protein bS6c (96 aa).

Belongs to the bacterial ribosomal protein bS6 family.

The protein resides in the plastid. The protein localises to the chloroplast. Binds together with bS18 to 16S ribosomal RNA. This Trieres chinensis (Marine centric diatom) protein is Small ribosomal subunit protein bS6c (rps6).